The primary structure comprises 283 residues: MYRGRFAPTPSGPLHLGSLVAAVGSYLDAKAHRGEWLVRIEDVDKPRAVPGAADTILTQLEAHGLEWDGSVLYQSQRDSVYQHQLNQLENAQRLYQCDCSRRAIRARSDHYDGYCRNRQPRSTPYALRFINNNPVDTFNDRAHGLLEDHSASVSEDFVLKRRDGLYAYQLAVVVDDIEQGITDIVRGSDLITPSFWQLTLWQYFTGKQPRMMHLPLIMNDDGLKLSKQNHAPSIESSQARNNLFTALDYLGIKPESELRHSPVSEILQQALQSWCKKWHIAGR.

Residues 5 to 9 (RFAPT) and Glu-41 each bind L-glutamate. A 'HIGH' region motif is present at residues 8–18 (PTPSGPLHLGS). Positions 97, 99, 111, and 115 each coordinate Zn(2+). The L-glutamate site is built by Tyr-168 and Arg-186. A 'KMSKS' region motif is present at residues 224-228 (KLSKQ). Lys-227 lines the ATP pocket.

It belongs to the class-I aminoacyl-tRNA synthetase family. GluQ subfamily. Zn(2+) serves as cofactor.

In terms of biological role, catalyzes the tRNA-independent activation of glutamate in presence of ATP and the subsequent transfer of glutamate onto a tRNA(Asp). Glutamate is transferred on the 2-amino-5-(4,5-dihydroxy-2-cyclopenten-1-yl) moiety of the queuosine in the wobble position of the QUC anticodon. In Idiomarina loihiensis (strain ATCC BAA-735 / DSM 15497 / L2-TR), this protein is Glutamyl-Q tRNA(Asp) synthetase.